Consider the following 156-residue polypeptide: Ribosomal RNA large subunit methyltransferase H (156 aa).

S-adenosyl-L-methionine-binding positions include Leu-73, Gly-104, and 123 to 128; that span reads LSALTL.

Belongs to the RNA methyltransferase RlmH family. In terms of assembly, homodimer.

The protein localises to the cytoplasm. It catalyses the reaction pseudouridine(1915) in 23S rRNA + S-adenosyl-L-methionine = N(3)-methylpseudouridine(1915) in 23S rRNA + S-adenosyl-L-homocysteine + H(+). Functionally, specifically methylates the pseudouridine at position 1915 (m3Psi1915) in 23S rRNA. The sequence is that of Ribosomal RNA large subunit methyltransferase H from Shewanella oneidensis (strain ATCC 700550 / JCM 31522 / CIP 106686 / LMG 19005 / NCIMB 14063 / MR-1).